The following is a 319-amino-acid chain: Sulfate adenylyltransferase subunit 2 (319 aa).

Belongs to the PAPS reductase family. CysD subfamily. Heterodimer composed of CysD, the smaller subunit, and CysN.

It carries out the reaction sulfate + ATP + H(+) = adenosine 5'-phosphosulfate + diphosphate. It participates in sulfur metabolism; hydrogen sulfide biosynthesis; sulfite from sulfate: step 1/3. Functionally, with CysN forms the ATP sulfurylase (ATPS) that catalyzes the adenylation of sulfate producing adenosine 5'-phosphosulfate (APS) and diphosphate, the first enzymatic step in sulfur assimilation pathway. APS synthesis involves the formation of a high-energy phosphoric-sulfuric acid anhydride bond driven by GTP hydrolysis by CysN coupled to ATP hydrolysis by CysD. This Methylobacterium radiotolerans (strain ATCC 27329 / DSM 1819 / JCM 2831 / NBRC 15690 / NCIMB 10815 / 0-1) protein is Sulfate adenylyltransferase subunit 2.